The primary structure comprises 92 residues: Small ribosomal subunit protein uS19c (92 aa).

Belongs to the universal ribosomal protein uS19 family.

Its subcellular location is the plastid. The protein localises to the chloroplast. Its function is as follows. Protein S19 forms a complex with S13 that binds strongly to the 16S ribosomal RNA. The polypeptide is Small ribosomal subunit protein uS19c (Physcomitrium patens (Spreading-leaved earth moss)).